Reading from the N-terminus, the 73-residue chain is MNDLALALGLGIPLSLLVGMILGYFISIKIFKKQMRDNPPITENQIKAMYAKMGRKLSETQVKEIMRSIKNQK.

Residues 6 to 26 (LALGLGIPLSLLVGMILGYFI) form a helical membrane-spanning segment.

Belongs to the UPF0154 family.

It localises to the membrane. The sequence is that of UPF0154 protein MG335.1 from Mycoplasma genitalium (strain ATCC 33530 / DSM 19775 / NCTC 10195 / G37) (Mycoplasmoides genitalium).